We begin with the raw amino-acid sequence, 302 residues long: MAFSRESALDVAKVLSESLPYIQRFAGKTLVIKYGGNAMTDENLQAGFARDIVLMKAIGINPIVVHGGGPQIGDMLAKLNIESKFINGMRVTDTATMDVVEMVLGGQVNKEIVNLICEAGGKAIGITGKDSRFIKAKKLFVKHQAEGMTAPEQVDIGHVGEVASVDTSFLKFFENSDLIPVIAPIGVDDEGNSYNINADLVAGKVAEAVGAEKLMLLTNISGVQDKQGNVLTGLSTAQVDALIADGTIYGGMLPKISCALSAVNAGVTSAHIIDGRVPHATLLEIFTDTGVGTLISNTKVGE.

Substrate contacts are provided by residues 68–69 (GG), R90, and N195.

Belongs to the acetylglutamate kinase family. ArgB subfamily.

It is found in the cytoplasm. The catalysed reaction is N-acetyl-L-glutamate + ATP = N-acetyl-L-glutamyl 5-phosphate + ADP. Its pathway is amino-acid biosynthesis; L-arginine biosynthesis; N(2)-acetyl-L-ornithine from L-glutamate: step 2/4. Functionally, catalyzes the ATP-dependent phosphorylation of N-acetyl-L-glutamate. This is Acetylglutamate kinase from Marinomonas sp. (strain MWYL1).